Reading from the N-terminus, the 378-residue chain is Protein RecA (378 aa).

Position 79–86 (79–86 (GPESSGKT)) interacts with ATP.

This sequence belongs to the RecA family.

Its subcellular location is the cytoplasm. Can catalyze the hydrolysis of ATP in the presence of single-stranded DNA, the ATP-dependent uptake of single-stranded DNA by duplex DNA, and the ATP-dependent hybridization of homologous single-stranded DNAs. It interacts with LexA causing its activation and leading to its autocatalytic cleavage. In Streptococcus equi subsp. zooepidemicus (strain H70), this protein is Protein RecA.